Reading from the N-terminus, the 455-residue chain is Ribosomal protein uS12 methylthiotransferase RimO (455 aa).

The MTTase N-terminal domain occupies 10–120; sequence PKVGMVSLGC…VVEAVHDAAP (111 aa). Residues C19, C55, C84, C151, C155, and C158 each contribute to the [4Fe-4S] cluster site. The region spanning 137–380 is the Radical SAM core domain; that stretch reads LTPRHYSYLK…MAKTAAISAA (244 aa). Residues 383 to 455 form the TRAM domain; sequence EAKIGRTLPV…DEHDLFGVVT (73 aa).

The protein belongs to the methylthiotransferase family. RimO subfamily. [4Fe-4S] cluster is required as a cofactor.

Its subcellular location is the cytoplasm. It carries out the reaction L-aspartate(89)-[ribosomal protein uS12]-hydrogen + (sulfur carrier)-SH + AH2 + 2 S-adenosyl-L-methionine = 3-methylsulfanyl-L-aspartate(89)-[ribosomal protein uS12]-hydrogen + (sulfur carrier)-H + 5'-deoxyadenosine + L-methionine + A + S-adenosyl-L-homocysteine + 2 H(+). In terms of biological role, catalyzes the methylthiolation of an aspartic acid residue of ribosomal protein uS12. This Sphingopyxis alaskensis (strain DSM 13593 / LMG 18877 / RB2256) (Sphingomonas alaskensis) protein is Ribosomal protein uS12 methylthiotransferase RimO.